Here is a 227-residue protein sequence, read N- to C-terminus: NADH-quinone oxidoreductase subunit C (227 aa).

This sequence belongs to the complex I 30 kDa subunit family. In terms of assembly, NDH-1 is composed of 14 different subunits. Subunits NuoB, C, D, E, F, and G constitute the peripheral sector of the complex.

The protein localises to the cell inner membrane. It carries out the reaction a quinone + NADH + 5 H(+)(in) = a quinol + NAD(+) + 4 H(+)(out). NDH-1 shuttles electrons from NADH, via FMN and iron-sulfur (Fe-S) centers, to quinones in the respiratory chain. The immediate electron acceptor for the enzyme in this species is believed to be ubiquinone. Couples the redox reaction to proton translocation (for every two electrons transferred, four hydrogen ions are translocated across the cytoplasmic membrane), and thus conserves the redox energy in a proton gradient. The protein is NADH-quinone oxidoreductase subunit C of Legionella pneumophila (strain Lens).